A 95-amino-acid polypeptide reads, in one-letter code: MLYTFSQSDYPKTELDDYFSYITEKDAVVLWQDGVLLAIKYPDYFAKCKGNCMILKQDILARNLTALLPQSSKIKLISIEELVGITENYLPQLSL.

This is an uncharacterized protein from Haemophilus influenzae (strain ATCC 51907 / DSM 11121 / KW20 / Rd).